We begin with the raw amino-acid sequence, 323 residues long: MPLPAAAFARILVVSRQRLFNTRIIHTSGSGYSITQCRFYKTTPCLTHKQSQILDLDAPKSRENREKDGGKSKKSKKSIKWSTGSVLMLTIPVFAFSLGIWQTFRLKWKLDLIEHLKGRLNQTAQELPEDLSCESLEPLEYCRVTVTGEFLHEKEFIISPRGRFDPGKKTSAAAGSMLSENEMSSHGGHLITPFRLKNSGKIILINRGWLPSFYFDPETRQKTNPRGTLTLPAIVRKTEKRPQFVGQNVPEQGVWYYRDLNQMAKHYGTEPVLLDAAYETTVPGGPIGGQTNINVRNEHLNYLTTWFTLTLVTMLMWIHKFRK.

Residues 57 to 71 (DAPKSRENREKDGGK) are compositionally biased toward basic and acidic residues. The tract at residues 57-76 (DAPKSRENREKDGGKSKKSK) is disordered. 2 helical membrane-spanning segments follow: residues 81-101 (WSTG…LGIW) and 299-319 (HLNY…MWIH).

Belongs to the SURF1 family.

It is found in the mitochondrion inner membrane. Its function is as follows. Probably involved in the biogenesis of the COX complex. This Caenorhabditis elegans protein is SURF1-like protein (sft-1).